The primary structure comprises 180 residues: uncharacterized protein (180 aa).

An N-acetyltransferase domain is found at 31–180 (LLVRTAEWLR…HLFEKEITAE (150 aa)).

It belongs to the acetyltransferase family.

This is an uncharacterized protein from Bacillus subtilis (strain 168).